The chain runs to 361 residues: MANSAPENVHPQKAFGWAARDTSGTLSPLKFSRRATGEQDVTFKVLYCGICHSDLHYIKNEWGNAVYPAIPGHEIVGVVTEVGNKVQNFKVGDKVGVGCMVGSCRSCESCENHLENYCPKMILTYGSTYYDGTLTYGGYSDIMVVEEHFAVRIPDNMALDATAPLLCAGVTVYSPLKHFELDKPGLHIGVVGLGGLGHMAVKFGKAFGAKVTVISTSPNKKDEAVNRLGADSFVVSREPEQMQSAMGTLDGIIDTVSAAHPLLPLLGLLKSQGKMIMVGVPDKPLELPVFPLLQGRKILAGSCIGGMKETQEMIDFAAKHDIKSDIEVVPMDYVNTAMERLLKGDVRYRFVIDVANTLKAE.

Residues Cys-51, His-73, Cys-104, Cys-107, Cys-110, Cys-118, and Cys-167 each contribute to the Zn(2+) site.

Belongs to the zinc-containing alcohol dehydrogenase family. The cofactor is Zn(2+).

It catalyses the reaction D-mannitol + NAD(+) = D-mannose + NADH + H(+). Oxidizes mannitol to mannose. Provides the initial step by which translocated mannitol is committed to central metabolism and, by regulating mannitol pool size, is important in regulating salt tolerance at the cellular level. The chain is Probable mannitol dehydrogenase (ELI3) from Mesembryanthemum crystallinum (Common ice plant).